The following is a 255-amino-acid chain: Vitamin B12 import ATP-binding protein BtuD (255 aa).

In terms of domain architecture, ABC transporter spans 2 to 240; that stretch reads MHVKHIALGS…EGLAEVFQTQ (239 aa). 30–37 is an ATP binding site; sequence GPNGSGKS.

It belongs to the ABC transporter superfamily. Vitamin B12 importer (TC 3.A.1.13.1) family. As to quaternary structure, the complex is composed of two ATP-binding proteins (BtuD), two transmembrane proteins (BtuC) and a solute-binding protein (BtuF).

The protein localises to the cell inner membrane. It carries out the reaction an R-cob(III)alamin(out) + ATP + H2O = an R-cob(III)alamin(in) + ADP + phosphate + H(+). In terms of biological role, part of the ABC transporter complex BtuCDF involved in vitamin B12 import. Responsible for energy coupling to the transport system. The chain is Vitamin B12 import ATP-binding protein BtuD from Vibrio campbellii (strain ATCC BAA-1116).